The chain runs to 99 residues: MSTILVLGGSNGRTLEKLAKKRDCQVIFHDGKNHGGVKKTFRSVIKKCDVIVIQKGACGHVSIDVAKEYAKKYDVPLLFNQGFGGTGALEMGLKHLKAA.

It belongs to the UPF0751 family.

The sequence is that of UPF0751 protein BAMEG_A0107 from Bacillus anthracis (strain CDC 684 / NRRL 3495).